A 517-amino-acid polypeptide reads, in one-letter code: L-amino-acid oxidase (517 aa).

The first 18 residues, 1–18, serve as a signal peptide directing secretion; the sequence is MNVFFMFSLLFLAALESC. Cys-29 and Cys-192 are joined by a disulfide. Residues 62–63, 82–83, Arg-90, and 106–109 each bind FAD; these read MA, EA, and GPMR. Arg-109 contributes to the substrate binding site. The N-linked (GlcNAc...) asparagine glycan is linked to Asn-191. Val-280 is an FAD binding site. A disulfide bridge connects residues Cys-350 and Cys-431. A substrate-binding site is contributed by Tyr-391. FAD-binding positions include Glu-476 and 483 to 488; that span reads GWIDST. 483–484 contributes to the substrate binding site; it reads GW.

It belongs to the flavin monoamine oxidase family. FIG1 subfamily. In terms of assembly, homodimer; non-covalently linked. The cofactor is FAD. In terms of processing, N-glycosylated. In terms of tissue distribution, expressed by the venom gland.

The protein localises to the secreted. The catalysed reaction is an L-alpha-amino acid + O2 + H2O = a 2-oxocarboxylate + H2O2 + NH4(+). In terms of biological role, catalyzes an oxidative deamination of predominantly hydrophobic and aromatic L-amino acids, thus producing hydrogen peroxide that may contribute to the diverse toxic effects of this enzyme. Exhibits diverse biological activities, such as hemorrhage, hemolysis, edema, apoptosis of vascular endothelial cells or tumor cell lines, antibacterial and antiparasitic activities, as well as regulation of platelet aggregation. Its effect on platelets is controversial, since it either induces aggregation or inhibits agonist-induced aggregation. These different effects are probably due to different experimental conditions. The polypeptide is L-amino-acid oxidase (Demansia vestigiata (Lesser black whip snake)).